A 480-amino-acid polypeptide reads, in one-letter code: MNRVHIKTYGCQMNERDSEAVAAMLRARGYRIVADENDCDILLLNTCSVRDAAEQKAIGKAGYLQQRKKKQPDFVLGILGCMAQNRGASLLDQLPDVDLIVGTQKFHQVPGYLDNLRAARDAGVPIGETIVDIGEEAGSQNTIKDHLLPQDSDSDSQPSTLNSQLRGAAAPPPQITAFVSIQQGCNMDCAFCIVPKTRGDERSRPMDDIVRECEQLAARGVREVTLLGQIVTSYGRRDYTHTNGISPFVQLLERVHALDGIERIRFTSPHPRGFKDDLVAAYGRLPKLCGYVHLPLQSGSNRILRAMNRPYTRERYREIVDALRAVRSDMYFSTDVIVGFPGETDEDFEQTRELFEACNYDMAYVFKYSVRTGTPAAERGDQVPEDVKEQRNQLLLELLRQNSERRNALLLDTVEEVLVEGPDKTGQRFTGRTRGNRVCIFEATPDLVGRLVSLRITRASVSTLYGELMLAGVGRERNRK.

Residues N2–A118 form the MTTase N-terminal domain. [4Fe-4S] cluster is bound by residues C11, C47, and C81. The tract at residues D145 to A169 is disordered. A compositionally biased stretch (low complexity) spans P149 to S159. The Radical SAM core domain occupies P171–R405. The [4Fe-4S] cluster site is built by C185, C189, and C192. Residues A408 to L470 enclose the TRAM domain.

This sequence belongs to the methylthiotransferase family. MiaB subfamily. Monomer. [4Fe-4S] cluster is required as a cofactor.

It is found in the cytoplasm. The enzyme catalyses N(6)-dimethylallyladenosine(37) in tRNA + (sulfur carrier)-SH + AH2 + 2 S-adenosyl-L-methionine = 2-methylsulfanyl-N(6)-dimethylallyladenosine(37) in tRNA + (sulfur carrier)-H + 5'-deoxyadenosine + L-methionine + A + S-adenosyl-L-homocysteine + 2 H(+). Catalyzes the methylthiolation of N6-(dimethylallyl)adenosine (i(6)A), leading to the formation of 2-methylthio-N6-(dimethylallyl)adenosine (ms(2)i(6)A) at position 37 in tRNAs that read codons beginning with uridine. The sequence is that of tRNA-2-methylthio-N(6)-dimethylallyladenosine synthase from Opitutus terrae (strain DSM 11246 / JCM 15787 / PB90-1).